We begin with the raw amino-acid sequence, 264 residues long: 3-methyl-2-oxobutanoate hydroxymethyltransferase (264 aa).

Residues aspartate 45 and aspartate 84 each contribute to the Mg(2+) site. 3-methyl-2-oxobutanoate contacts are provided by residues 45-46 (DS), aspartate 84, and lysine 112. Glutamate 114 serves as a coordination point for Mg(2+). Residue glutamate 181 is the Proton acceptor of the active site.

It belongs to the PanB family. As to quaternary structure, homodecamer; pentamer of dimers. Mg(2+) is required as a cofactor.

Its subcellular location is the cytoplasm. The catalysed reaction is 3-methyl-2-oxobutanoate + (6R)-5,10-methylene-5,6,7,8-tetrahydrofolate + H2O = 2-dehydropantoate + (6S)-5,6,7,8-tetrahydrofolate. The protein operates within cofactor biosynthesis; (R)-pantothenate biosynthesis; (R)-pantoate from 3-methyl-2-oxobutanoate: step 1/2. Its function is as follows. Catalyzes the reversible reaction in which hydroxymethyl group from 5,10-methylenetetrahydrofolate is transferred onto alpha-ketoisovalerate to form ketopantoate. The chain is 3-methyl-2-oxobutanoate hydroxymethyltransferase from Shigella flexneri serotype 5b (strain 8401).